The chain runs to 129 residues: Protein BEX2 (129 aa).

Residues 1 to 37 form a disordered region; that stretch reads MESKVEQGVKNLNMENDHQEKEEKEEKPQDASKRDPI. The segment covering 15–36 has biased composition (basic and acidic residues); it reads ENDHQEKEEKEEKPQDASKRDP. Arginine 51 is modified (omega-N-methylarginine). A his cluster region spans residues 118–122; that stretch reads HHDHH. A Zn(2+)-binding site is contributed by cysteine 126.

It belongs to the BEX family. Interacts with LMO2, possibly leading to regulate the transcriptional activity of a DNA-binding complex containing LMO2. Interacts with OMP. As to expression, primarily localized to neuronal cells within several regions of the brain, including the olfactory epithelium, bulb, peri/paraventricular nuclei, suprachiasmatic nucleus, arcuate nucleus, median eminence, lateral hypothalamic area, thalamus, hippocampus and cerebellum (at protein level).

The protein localises to the cytoplasm. Its subcellular location is the nucleus. Functionally, regulator of mitochondrial apoptosis and G1 cell cycle. Regulates the level of PP2A regulatory subunit B and PP2A phosphatase activity. In absence of reductive stress, acts as a pseudosubstrate for the CRL2(FEM1B) complex: associates with FEM1B via zinc, thereby preventing association between FEM1B and its substrates. The chain is Protein BEX2 from Mus musculus (Mouse).